Reading from the N-terminus, the 480-residue chain is UDP-N-acetylmuramate--L-alanine ligase (480 aa).

129 to 135 (GSHGKTT) contacts ATP.

Belongs to the MurCDEF family.

It localises to the cytoplasm. The catalysed reaction is UDP-N-acetyl-alpha-D-muramate + L-alanine + ATP = UDP-N-acetyl-alpha-D-muramoyl-L-alanine + ADP + phosphate + H(+). It participates in cell wall biogenesis; peptidoglycan biosynthesis. Its function is as follows. Cell wall formation. This is UDP-N-acetylmuramate--L-alanine ligase from Syntrophus aciditrophicus (strain SB).